Here is a 348-residue protein sequence, read N- to C-terminus: tRNA pseudouridine synthase D (348 aa).

Aspartate 78 acts as the Nucleophile in catalysis. One can recognise a TRUD domain in the interval 150–304 (GLPNFFGPQR…AEGTRRAARL (155 aa)).

It belongs to the pseudouridine synthase TruD family.

The enzyme catalyses uridine(13) in tRNA = pseudouridine(13) in tRNA. In terms of biological role, responsible for synthesis of pseudouridine from uracil-13 in transfer RNAs. This chain is tRNA pseudouridine synthase D, found in Anaeromyxobacter dehalogenans (strain 2CP-1 / ATCC BAA-258).